We begin with the raw amino-acid sequence, 314 residues long: Olfactory receptor 1 (314 aa).

At 1–29 the chain is on the extracellular side; sequence MTERNQTVISQFLLLGLPIPPEHQHVFYA. Asn-5 carries N-linked (GlcNAc...) asparagine glycosylation. A helical membrane pass occupies residues 30–50; that stretch reads LFLSMYLTTVLGNLIIIILIL. Residues 51–59 are Cytoplasmic-facing; the sequence is LDSHLHTPM. A helical membrane pass occupies residues 60–81; sequence YLFLSNLSFSDLCFSSVTMPKL. Residues 82–97 lie on the Extracellular side of the membrane; sequence LQNMQSQVPSIPYAGC. A disulfide bond links Cys-97 and Cys-179. The chain crosses the membrane as a helical span at residues 98-118; that stretch reads LSQIYFFLFFGDLGNFLLVAM. The Cytoplasmic segment spans residues 119–143; sequence AYDRYVAICFPLHYMSIMSPKLCVS. Residues 144 to 164 traverse the membrane as a helical segment; it reads LVVLSWVLTTFHAMLHTLLMA. The Extracellular portion of the chain corresponds to 165–196; the sequence is RLSFCEDNVIPHFFCDMSALLKLACSDTRVNE. Residues 197 to 217 traverse the membrane as a helical segment; the sequence is VVIFIVVSLFLVLPFALIIMS. Residues 218-240 lie on the Cytoplasmic side of the membrane; sequence YVRIVSSILKVPSSQGIYKAFST. Residues 241-261 form a helical membrane-spanning segment; the sequence is CGSHLSVVSLFYGTVIGLYLC. The Extracellular segment spans residues 262 to 271; it reads PSSNNSTVKE. Residues Asn-265 and Asn-266 are each glycosylated (N-linked (GlcNAc...) asparagine). The chain crosses the membrane as a helical span at residues 272–292; it reads TVMSLMYTVVTPMLNPFIYSL. The Cytoplasmic segment spans residues 293 to 314; it reads RNRDIKGAMERIFCKRKIQLNL.

Belongs to the G-protein coupled receptor 1 family. As to expression, olfactory epithelium.

The protein localises to the cell membrane. Odorant receptor. Activated by a lily-derived aldehyde as well as other odorants. May signal through an inositol 1,4,5-trisphosphate (IP3) second messenger system. This Rattus norvegicus (Rat) protein is Olfactory receptor 1.